We begin with the raw amino-acid sequence, 471 residues long: Probable multidrug resistance protein NorM (471 aa).

Transmembrane regions (helical) follow at residues 38 to 58 (PVVL…IVVG), 69 to 89 (AMAW…LVGV), 114 to 134 (VYAG…GPMF), 152 to 172 (LIVF…TFWL), 197 to 217 (LLLV…GAWA), 266 to 286 (GASN…CGWI), 289 to 309 (VAVA…MVPL), 334 to 354 (AGWI…LLLY), 370 to 390 (ALAL…PDAV), 409 to 429 (ITHL…LAIP), and 434 to 454 (LNGV…FLLM).

This sequence belongs to the multi antimicrobial extrusion (MATE) (TC 2.A.66.1) family.

It localises to the cell inner membrane. Functionally, multidrug efflux pump. This is Probable multidrug resistance protein NorM (norM) from Caulobacter vibrioides (strain ATCC 19089 / CIP 103742 / CB 15) (Caulobacter crescentus).